We begin with the raw amino-acid sequence, 339 residues long: HTH-type transcriptional regulator KdgR (339 aa).

In terms of domain architecture, HTH lacI-type spans 9 to 64 (TTIKDVAECAGVSKSTVSRYINGKIDAISPEKVKNIKKAIAELNYRPSKMAQGLKI). The segment at residues 11–30 (IKDVAECAGVSKSTVSRYIN) is a DNA-binding region (H-T-H motif).

In terms of biological role, transcriptional repressor of the kdgRKAT and kduID operons for pectin utilization. In Bacillus subtilis (strain 168), this protein is HTH-type transcriptional regulator KdgR (kdgR).